We begin with the raw amino-acid sequence, 309 residues long: Porphobilinogen deaminase (309 aa).

An S-(dipyrrolylmethanemethyl)cysteine modification is found at Cys241.

This sequence belongs to the HMBS family. As to quaternary structure, monomer. It depends on dipyrromethane as a cofactor.

The catalysed reaction is 4 porphobilinogen + H2O = hydroxymethylbilane + 4 NH4(+). The protein operates within porphyrin-containing compound metabolism; protoporphyrin-IX biosynthesis; coproporphyrinogen-III from 5-aminolevulinate: step 2/4. Functionally, tetrapolymerization of the monopyrrole PBG into the hydroxymethylbilane pre-uroporphyrinogen in several discrete steps. This Bacillus anthracis (strain A0248) protein is Porphobilinogen deaminase.